We begin with the raw amino-acid sequence, 137 residues long: Cellular retinoic acid-binding protein 1 (137 aa).

The Nuclear localization signal motif lies at 21–31; sequence KALGVNAMLRK. 132–134 serves as a coordination point for all-trans-retinoate; the sequence is RIY.

Belongs to the calycin superfamily. Fatty-acid binding protein (FABP) family.

The protein resides in the cytoplasm. Its function is as follows. Cytosolic CRABPs may regulate the access of retinoic acid to the nuclear retinoic acid receptors. This Homo sapiens (Human) protein is Cellular retinoic acid-binding protein 1 (CRABP1).